Here is a 689-residue protein sequence, read N- to C-terminus: Protein CFAP20DC (689 aa).

Disordered regions lie at residues 143–179 (GPPP…TVEK), 217–236 (LPIM…NNNR), 241–262 (LKST…NNTN), 333–424 (SKES…PSEL), and 583–660 (SIST…LSVE). Polar residues predominate over residues 150–176 (RRSNMRISSETVRSVGSKNNRSCQPST). Residues 343 to 359 (EESQSVPKDIFTFSSRP) are compositionally biased toward polar residues. Over residues 394-405 (SEDDFYGGDSSE) the composition is skewed to acidic residues. The span at 411-421 (IQGSRGPTTGP) shows a compositional bias: polar residues. Residues 583–593 (SISTSSDDTTT) show a composition bias toward low complexity.

The sequence is that of Protein CFAP20DC (CFAP20DC) from Macaca fascicularis (Crab-eating macaque).